A 213-amino-acid polypeptide reads, in one-letter code: Cytokinin riboside 5'-monophosphate phosphoribohydrolase LOG2 (213 aa).

Residues Glu-79, 97-98 (RK), 114-120 (GYGTFEE), and Thr-126 contribute to the substrate site.

The protein belongs to the LOG family. In terms of tissue distribution, expressed in roots and shoots. Detected in root hairs.

It is found in the cytoplasm. It localises to the nucleus. The catalysed reaction is N(6)-(dimethylallyl)adenosine 5'-phosphate + H2O = N(6)-dimethylallyladenine + D-ribose 5-phosphate. The enzyme catalyses 9-ribosyl-trans-zeatin 5'-phosphate + H2O = trans-zeatin + D-ribose 5-phosphate. Functionally, cytokinin-activating enzyme working in the direct activation pathway. Phosphoribohydrolase that converts inactive cytokinin nucleotides to the biologically active free-base forms. This is Cytokinin riboside 5'-monophosphate phosphoribohydrolase LOG2 (LOG2) from Arabidopsis thaliana (Mouse-ear cress).